We begin with the raw amino-acid sequence, 418 residues long: MTDVEQPVSVEDQQAQAQSYYDQVLGNAYVQTAINAYTKTKEFHPLLNSTLNSAEEKVSTVGNYAAQKAYDGYNSYYVKPKNTAYEAVSYGTERAKTAVESGKQAAIVGGTFGIGAAVVLTQFSLALSAGGAALVLEQVDSAKKLGSSAISTIKEAELAVEHRIFSALHQAQRIAMVPVEKITENTNSLLDILDGAVQKGLNIEVPPSVNLTIGQRVKNLASLIVQGVSNKLFKAHDHVIDPINERARNYLEQLSQSFVLLDIVREKKTWVIEKSNELSTSVFDFKKTLEEEAQKYKVAPEEMLMKHIQSTSEQLSTQLQSLREKGQNVFGDGTKIDSTIDYLENLKKNFTDAEDVYKVRDEVLNEGRQRIAELSTWTTSLLIISAEWQFEPEDLLIEELYFDAPPPVRTRNLYRNRA.

Residues 211-275 (LTIGQRVKNL…EKKTWVIEKS (65 aa)) form a required for lipid droplet localization region.

The protein belongs to the perilipin family. Expressed in intestinal and epidermal cells. Expressed in the muscle and hypodermis.

The protein localises to the lipid droplet. Lipid droplet-associated protein which plays a role in lipid droplet clustering. The protein is Perilipin-1 homolog of Caenorhabditis elegans.